A 417-amino-acid chain; its full sequence is MTEKENLGGSTLLPAYFGEFGGQFVAESLLPALDQLEKAFVDATNSPEFREELGGYLRDYLGRPTPLTECSNLPLSGEGKGFARIFLKREDLVHGGAHKTNQVIGQVLLAKRMGKTRIIAETGAGQHGTATALACALMGLECVVYMGAKDVARQQPNVYRMQLHGAKVIPVESGSGTLKDAVNEALRDWTATFHESHYLLGTAAGPHPFPTIVREFHKVISEEAKAQMLERTGKLPDVVVACVGGGSNAIGMFADFIDDEGVELVGAEPAGEGLDSGKHGATITNGQIGILHGTRSYLMRNSDGQVEESYSISAGLDYPGVGPQHAHLHATGRATYVGITDAEALQAFQYLARYEGIIPALESSHAFAYALKRAKTAEEEGQNLTILVSLSGRGDKDVDHVRRTLEENPELILKDNR.

Position 99 is an N6-(pyridoxal phosphate)lysine (lysine 99).

This sequence belongs to the TrpB family. Tetramer of two alpha and two beta chains. Requires pyridoxal 5'-phosphate as cofactor.

The catalysed reaction is (1S,2R)-1-C-(indol-3-yl)glycerol 3-phosphate + L-serine = D-glyceraldehyde 3-phosphate + L-tryptophan + H2O. It functions in the pathway amino-acid biosynthesis; L-tryptophan biosynthesis; L-tryptophan from chorismate: step 5/5. Functionally, the beta subunit is responsible for the synthesis of L-tryptophan from indole and L-serine. The chain is Tryptophan synthase beta chain from Corynebacterium glutamicum (strain R).